The chain runs to 272 residues: uncharacterized protein (272 aa).

Helical transmembrane passes span 9–29 (PVGFVLGTIIIVIGIISGSGV), 38–58 (LTSFFIVTGGLCAAVFISFPP), 154–174 (AGEFAPAWGMIGTLVGLVLML), and 188–208 (AIALLTTLYGSLLANMVFNPI). The Cytoplasmic portion of the chain corresponds to 209–272 (AAKLEEKTES…KTKKGSVHEA (64 aa)).

It belongs to the MotA family.

It is found in the cell membrane. Its function is as follows. May be involved in some transport function. This is an uncharacterized protein from Bacillus subtilis (strain 168).